A 474-amino-acid polypeptide reads, in one-letter code: PRAME family member 10 (474 aa).

An LRR 1; degenerate repeat occupies 97 to 124 (RWKLQVLDLRDVDENFWTIWSGARVLSC). An LRR 2; degenerate repeat occupies 179 to 203 (HLCCSKVQNYSMPTSSFRNLLERIY). Residues 204-230 (PDSIQELEVWKKCSLNKTGKFAPYLSQ) form an LRR 3; degenerate repeat. The LRR 4; degenerate repeat unit spans residues 231 to 265 (MSNLRELFLAFGYERELYVSVQWPCIPDLDSPFLC). LRR repeat units follow at residues 266–291 (LYYP…LRYL), 292–323 (KNPL…SQLK), 324–342 (ELRL…PLGV), 348–375 (AATL…ALSH), and 376–400 (CSQL…LLRH).

The protein belongs to the PRAME family.

The protein is PRAME family member 10 of Homo sapiens (Human).